Reading from the N-terminus, the 560-residue chain is Chaperonin GroEL 2 (560 aa).

ATP contacts are provided by residues 29-32 (TLGP), Lys50, 86-90 (DGTTT), Gly414, and Asp494. Residues 524-546 (EDEDDDDGGGGGGGGMPAGGAGG) are disordered. A compositionally biased stretch (gly residues) spans 532-546 (GGGGGGGMPAGGAGG).

The protein belongs to the chaperonin (HSP60) family. In terms of assembly, forms a cylinder of 14 subunits composed of two heptameric rings stacked back-to-back. Interacts with the co-chaperonin GroES.

The protein resides in the cytoplasm. The enzyme catalyses ATP + H2O + a folded polypeptide = ADP + phosphate + an unfolded polypeptide.. Together with its co-chaperonin GroES, plays an essential role in assisting protein folding. The GroEL-GroES system forms a nano-cage that allows encapsulation of the non-native substrate proteins and provides a physical environment optimized to promote and accelerate protein folding. This Salinibacter ruber (strain DSM 13855 / M31) protein is Chaperonin GroEL 2.